Here is a 475-residue protein sequence, read N- to C-terminus: MSPKTETKASVGFKAGVKDYRLTYYTPEYQTKDTDILAAFRVTPQPGVPPEEAGAAVAAESSTGTWTTVWTDGLTSLDRYKGRCYDIEPVPGEESQFIAYVAYPLDLFEEGSVTNLFTSIVGNVFGFKALRALRLEDLRIPPSYSKTFQGPPHGIQVERDKLNKYGRPLLGCTIKPKLGLSAKNYGRAVYECLRGGLDFTKDDENVNSQPFMRWRDRFVFCAEAINKAQAETGEIKGHYLNATAGTCEEMIKRAVFARELGVPIVMHDYLTGGFTANTSLAHYCRDNGLLLHIHRAMHAVIDRQRNHGMHFRVLAKALRMSGGDHIHAGTVVGKLEGERDVTLGFVDLLRDDFIEKDRSRGIYFTQDWVSMPGVMPVASGGIHVWHMPALTEIFGDDSVLQFGGGTLGHPWGNAPGAVANRVALEACVQARNEGRDLAREGNEVIREAAKWSAELAAACEIWKEIKFEFDAIDRL.

Positions 1–2 (MS) are excised as a propeptide. P3 carries the N-acetylproline modification. K14 is modified (N6,N6,N6-trimethyllysine). Residues N123 and T173 each coordinate substrate. K175 serves as the catalytic Proton acceptor. K177 is a substrate binding site. 3 residues coordinate Mg(2+): K201, D203, and E204. Residue K201 is modified to N6-carboxylysine. H294 functions as the Proton acceptor in the catalytic mechanism. Substrate-binding residues include R295, H327, and S379.

It belongs to the RuBisCO large chain family. Type I subfamily. Heterohexadecamer of 8 large chains and 8 small chains; disulfide-linked. The disulfide link is formed within the large subunit homodimers. It depends on Mg(2+) as a cofactor. The disulfide bond which can form in the large chain dimeric partners within the hexadecamer appears to be associated with oxidative stress and protein turnover.

It localises to the plastid. Its subcellular location is the chloroplast. The enzyme catalyses 2 (2R)-3-phosphoglycerate + 2 H(+) = D-ribulose 1,5-bisphosphate + CO2 + H2O. It carries out the reaction D-ribulose 1,5-bisphosphate + O2 = 2-phosphoglycolate + (2R)-3-phosphoglycerate + 2 H(+). In terms of biological role, ruBisCO catalyzes two reactions: the carboxylation of D-ribulose 1,5-bisphosphate, the primary event in carbon dioxide fixation, as well as the oxidative fragmentation of the pentose substrate in the photorespiration process. Both reactions occur simultaneously and in competition at the same active site. The sequence is that of Ribulose bisphosphate carboxylase large chain from Pinus krempfii (Krempf's pine).